The sequence spans 360 residues: Dual-specificity RNA methyltransferase RlmN (360 aa).

Glutamate 91 functions as the Proton acceptor in the catalytic mechanism. Positions 110–343 (RSEKYTVCIS…CTIRESKGLD (234 aa)) constitute a Radical SAM core domain. A disulfide bridge links cysteine 117 with cysteine 348. [4Fe-4S] cluster contacts are provided by cysteine 124, cysteine 128, and cysteine 131. Residues 174 to 175 (GE), serine 206, 229 to 231 (SLH), and asparagine 305 each bind S-adenosyl-L-methionine. Residue cysteine 348 is the S-methylcysteine intermediate of the active site.

It belongs to the radical SAM superfamily. RlmN family. [4Fe-4S] cluster is required as a cofactor.

The protein resides in the cytoplasm. It catalyses the reaction adenosine(2503) in 23S rRNA + 2 reduced [2Fe-2S]-[ferredoxin] + 2 S-adenosyl-L-methionine = 2-methyladenosine(2503) in 23S rRNA + 5'-deoxyadenosine + L-methionine + 2 oxidized [2Fe-2S]-[ferredoxin] + S-adenosyl-L-homocysteine. It carries out the reaction adenosine(37) in tRNA + 2 reduced [2Fe-2S]-[ferredoxin] + 2 S-adenosyl-L-methionine = 2-methyladenosine(37) in tRNA + 5'-deoxyadenosine + L-methionine + 2 oxidized [2Fe-2S]-[ferredoxin] + S-adenosyl-L-homocysteine. Specifically methylates position 2 of adenine 2503 in 23S rRNA and position 2 of adenine 37 in tRNAs. m2A2503 modification seems to play a crucial role in the proofreading step occurring at the peptidyl transferase center and thus would serve to optimize ribosomal fidelity. The sequence is that of Dual-specificity RNA methyltransferase RlmN from Aliarcobacter butzleri (strain RM4018) (Arcobacter butzleri).